Reading from the N-terminus, the 620-residue chain is Glutathione-regulated potassium-efflux system protein KefC (620 aa).

12 helical membrane-spanning segments follow: residues 4 to 24, 26 to 46, 54 to 74, 90 to 110, 114 to 134, 149 to 169, 178 to 198, 218 to 238, 270 to 290, 294 to 314, 327 to 347, and 359 to 379; these read HTLIQALIYLGSAALIVPIAV, LGLGSVLGYLIAGCIIGPWGL, SILHFAEIGVVLMLFIIGLEL, GALQMVICGGLLGLFCMLLGL, VAELIGMTLALSSTAIAMQAM, FAVLLFQDIAAIPLVAMIPLL, MGAFALSALKVAGALVLVVLL, VFSAVALFLVFGFGLLLEEVG, GLLLGLFFIGVGMSIDFGTLL, LRIVILLLGFLIIKIAMLWLI, WFAVLLGQGSEFAFVVFGAAQ, and SLTLAVALSMAATPILLVILN. Residues 399–518 form the RCK N-terminal domain; that stretch reads QPRVIIAGFG…AGVEKPERET (120 aa). A disordered region spans residues 597-620; it reads GWQGTEEGKHTGNMADEPETKPSS.

The protein belongs to the monovalent cation:proton antiporter 2 (CPA2) transporter (TC 2.A.37) family. KefC subfamily. In terms of assembly, homodimer. Interacts with the regulatory subunit KefF.

The protein localises to the cell inner membrane. In terms of biological role, pore-forming subunit of a potassium efflux system that confers protection against electrophiles. Catalyzes K(+)/H(+) antiport. This Escherichia coli (strain K12 / MC4100 / BW2952) protein is Glutathione-regulated potassium-efflux system protein KefC.